Here is a 362-residue protein sequence, read N- to C-terminus: Cobalt-precorrin-5B C(1)-methyltransferase (362 aa).

It belongs to the CbiD family.

The catalysed reaction is Co-precorrin-5B + S-adenosyl-L-methionine = Co-precorrin-6A + S-adenosyl-L-homocysteine. It participates in cofactor biosynthesis; adenosylcobalamin biosynthesis; cob(II)yrinate a,c-diamide from sirohydrochlorin (anaerobic route): step 6/10. Catalyzes the methylation of C-1 in cobalt-precorrin-5B to form cobalt-precorrin-6A. This Burkholderia lata (strain ATCC 17760 / DSM 23089 / LMG 22485 / NCIMB 9086 / R18194 / 383) protein is Cobalt-precorrin-5B C(1)-methyltransferase.